The following is a 336-amino-acid chain: Zinc-type alcohol dehydrogenase-like protein SE_1777 (336 aa).

Belongs to the zinc-containing alcohol dehydrogenase family. Quinone oxidoreductase subfamily.

The sequence is that of Zinc-type alcohol dehydrogenase-like protein SE_1777 from Staphylococcus epidermidis (strain ATCC 12228 / FDA PCI 1200).